The sequence spans 258 residues: 5'-nucleotidase SurE (258 aa).

4 residues coordinate a divalent metal cation: Asp14, Asp15, Ser45, and Asn101.

Belongs to the SurE nucleotidase family. It depends on a divalent metal cation as a cofactor.

The protein resides in the cytoplasm. It catalyses the reaction a ribonucleoside 5'-phosphate + H2O = a ribonucleoside + phosphate. Functionally, nucleotidase that shows phosphatase activity on nucleoside 5'-monophosphates. The protein is 5'-nucleotidase SurE of Chlorobium limicola (strain DSM 245 / NBRC 103803 / 6330).